The chain runs to 85 residues: MFEKQKRVGLVVYLYYNRDARKVHKYGDVYYHSKKGRYLVMYVNQNDLEEKMKELQKLKFVKEAVASAFDEIDHQFVGNLHREAN.

The protein belongs to the UPF0298 family.

The protein localises to the cytoplasm. The chain is UPF0298 protein SUB0431 from Streptococcus uberis (strain ATCC BAA-854 / 0140J).